A 393-amino-acid chain; its full sequence is S-adenosylmethionine synthase (393 aa).

Residue His17 coordinates ATP. Position 19 (Asp19) interacts with Mg(2+). Glu45 is a binding site for K(+). L-methionine contacts are provided by Glu58 and Gln106. The flexible loop stretch occupies residues 106–116 (QSAHIAQGVDA). Residues 171-173 (DAK), 237-238 (KF), Asp246, 252-253 (RK), Ala269, and Lys273 each bind ATP. Residue Asp246 coordinates L-methionine. Lys277 is a binding site for L-methionine.

The protein belongs to the AdoMet synthase family. Homotetramer; dimer of dimers. The cofactor is Mg(2+). K(+) is required as a cofactor.

It is found in the cytoplasm. It carries out the reaction L-methionine + ATP + H2O = S-adenosyl-L-methionine + phosphate + diphosphate. Its pathway is amino-acid biosynthesis; S-adenosyl-L-methionine biosynthesis; S-adenosyl-L-methionine from L-methionine: step 1/1. Catalyzes the formation of S-adenosylmethionine (AdoMet) from methionine and ATP. The overall synthetic reaction is composed of two sequential steps, AdoMet formation and the subsequent tripolyphosphate hydrolysis which occurs prior to release of AdoMet from the enzyme. The protein is S-adenosylmethionine synthase of Jannaschia sp. (strain CCS1).